We begin with the raw amino-acid sequence, 190 residues long: HTH-type transcriptional repressor AcnR (190 aa).

Residues 10–70 (SMRRQEILEG…ALAREDAARM (61 aa)) form the HTH tetR-type domain. The segment at residues 33 to 52 (TVRRLEETVGKSRGAIFHHF) is a DNA-binding region (H-T-H motif). Citrate contacts are provided by residues 79-80 (LV), arginine 130, and asparagine 134. Glutamate 181 lines the Mg(2+) pocket. Position 185 (arginine 185) interacts with citrate.

Homodimer.

Functionally, acnR negatively controls the expression of the aconitase gene acn. The chain is HTH-type transcriptional repressor AcnR from Corynebacterium diphtheriae (strain ATCC 700971 / NCTC 13129 / Biotype gravis).